The primary structure comprises 176 residues: Calponin-1 (176 aa).

The region spanning 22–125 (PQTERQLRVW…STLIALASQA (104 aa)) is the Calponin-homology (CH) domain. The stretch at 158–176 (IGLQMGTNKFASQQGMTAY) is one Calponin-like repeat. A Phosphothreonine; by ROCK2 modification is found at T164. Residue S169 is modified to Phosphoserine; by ROCK2. A Phosphothreonine; by ROCK2 modification is found at T174.

It belongs to the calponin family. Smooth muscle, and tissues containing significant amounts of smooth muscle.

Thin filament-associated protein that is implicated in the regulation and modulation of smooth muscle contraction. It is capable of binding to actin, calmodulin and tropomyosin. The interaction of calponin with actin inhibits the actomyosin Mg-ATPase activity. This is Calponin-1 (CNN1) from Meleagris gallopavo (Wild turkey).